The primary structure comprises 93 residues: Non-histone chromosomal protein 6A (93 aa).

Disordered stretches follow at residues 1–23 (MVTPREPKKRTTRKKKDPNAPKR) and 69–93 (PYEAKAQADKKRYESEKELYNATLA). Residues 7 to 16 (PKKRTTRKKK) are compositionally biased toward basic residues. A DNA-binding region (HMG box) is located at residues 21 to 89 (PKRALSAYMF…RYESEKELYN (69 aa)). Residues 69–87 (PYEAKAQADKKRYESEKEL) show a composition bias toward basic and acidic residues.

Belongs to the NHP6 family. In terms of assembly, weakly associates with the stable SPT16-POB3 heterodimer to form the FACT (yFACT or SNP) complex, which is associated with nucleosomes. Multiple molecules of NHP6 (NHP6A and/or NHP6B) are required to recruit the SPT16-POB3 heterodimer to DNA.

It localises to the nucleus. It is found in the chromosome. DNA-binding protein that induces severe bending of DNA. Required for DNA-binding by the FACT complex, a general chromatin factor that acts to reorganize nucleosomes. The FACT complex is involved in multiple processes that require DNA as a template such as mRNA elongation, DNA replication and DNA repair. Also augments the fidelity of transcription by RNA polymerase III independently of any role in the FACT complex. Required for transcriptional initiation fidelity of some but not all tRNA genes. Seems to be functionally redundant with NHP6B. The protein is Non-histone chromosomal protein 6A (NHP6A) of Saccharomyces cerevisiae (strain ATCC 204508 / S288c) (Baker's yeast).